We begin with the raw amino-acid sequence, 490 residues long: Betaine aldehyde dehydrogenase (490 aa).

Positions 27 and 93 each coordinate K(+). NAD(+) is bound at residue 150-152 (GAW). The Charge relay system role is filled by K162. 176–179 (KPSE) contacts NAD(+). V180 serves as a coordination point for K(+). Position 230-233 (230-233 (GTDT)) interacts with NAD(+). L246 provides a ligand contact to K(+). The Proton acceptor role is filled by E252. Residues G254, C286, and E387 each contribute to the NAD(+) site. The active-site Nucleophile is C286. Residue C286 is modified to Cysteine sulfenic acid (-SOH). Residues K457 and G460 each coordinate K(+). E464 functions as the Charge relay system in the catalytic mechanism.

It belongs to the aldehyde dehydrogenase family. In terms of assembly, dimer of dimers. Requires K(+) as cofactor.

The enzyme catalyses betaine aldehyde + NAD(+) + H2O = glycine betaine + NADH + 2 H(+). The protein operates within amine and polyamine biosynthesis; betaine biosynthesis via choline pathway; betaine from betaine aldehyde: step 1/1. Its function is as follows. Involved in the biosynthesis of the osmoprotectant glycine betaine. Catalyzes the irreversible oxidation of betaine aldehyde to the corresponding acid. In Pseudomonas syringae pv. syringae (strain B728a), this protein is Betaine aldehyde dehydrogenase.